Reading from the N-terminus, the 549-residue chain is MCDMGGLDNLVANTAYLKAQGGDDKEMKKRRRSLSLPKPEQCASLRTSLDKDFESLCEKQPIGKKLFRQYLSQGGPECTTAAEFLDDLNEWELSESAARDKARTNIINKFCKEGSKSSLTFLTGDVATKCKAVSDKDFEEVMGQVKTATKEFLKGKPFTEYQASPFFDKFLQWKEYEKQPISEKYFYEFRTLGKGGFGEVCAVQVKNTGQMYACKKLCKKRLKKKHGEKMALLEKKILERVNSLFIVSLAYAYDTKTHLCLVMSLMNGGDLKYHIYNIGEKGIEMDRIIYYTAQIATGILHLHDMDIVYRDMKPENVLLDSQGQCRLSDLGLAVEIAVGKTISQKAGTGAYMAPEILNETPYRTSVDWWALGCSIYEMVAGYTPFKGPDAKKEKVEKEEVQRRILNEEPKFEHKNFDAATIDIIKQFLKKKIDERLGCKNDDPRKHEWFKSINFARLEAGLIDPPWVPKPNVVYAKDTGDIAEFSEIKGIEFDAKDDKFFKEFSTGAVSIAWQQEMIDTGLFDELSDPNRKESSGGSDDDKKSGTCTLL.

A Phosphoserine modification is found at serine 33. In terms of domain architecture, RGS spans 53 to 171; the sequence is FESLCEKQPI…QASPFFDKFL (119 aa). The Protein kinase domain maps to 186–449; it reads FYEFRTLGKG…NDDPRKHEWF (264 aa). Residues 192–200 and lysine 215 each bind ATP; that span reads LGKGGFGEV. The active-site Proton acceptor is the aspartate 311. Residues 450-515 form the AGC-kinase C-terminal domain; that stretch reads KSINFARLEA…GAVSIAWQQE (66 aa). Residues 522 to 549 form a disordered region; that stretch reads FDELSDPNRKESSGGSDDDKKSGTCTLL. The span at 527–543 shows a compositional bias: basic and acidic residues; the sequence is DPNRKESSGGSDDDKKS. Cysteine 546 carries the cysteine methyl ester modification. Cysteine 546 carries the S-geranylgeranyl cysteine lipid modification. Positions 547–549 are cleaved as a propeptide — removed in mature form; it reads TLL.

Belongs to the protein kinase superfamily. AGC Ser/Thr protein kinase family. GPRK subfamily. In terms of processing, phosphorylation at Ser-33 is regulated by light and activated by cAMP.

The protein localises to the membrane. It carries out the reaction L-threonyl-[rhodopsin] + ATP = O-phospho-L-threonyl-[rhodopsin] + ADP + H(+). The catalysed reaction is L-seryl-[rhodopsin] + ATP = O-phospho-L-seryl-[rhodopsin] + ADP + H(+). Functionally, retina-specific kinase involved in the shutoff of the photoresponse and adaptation to changing light conditions via cone opsin phosphorylation, including rhodopsin (RHO). This is Rhodopsin kinase grk7a (grk7a) from Danio rerio (Zebrafish).